The sequence spans 151 residues: Desiccation-related protein PCC27-45 (151 aa).

Belongs to the LEA type 2 family.

The chain is Desiccation-related protein PCC27-45 from Craterostigma plantagineum (Blue gem).